A 189-amino-acid polypeptide reads, in one-letter code: Peptidyl-tRNA hydrolase (189 aa).

TRNA is bound at residue tyrosine 15. Residue histidine 20 is the Proton acceptor of the active site. The tRNA site is built by phenylalanine 66, asparagine 68, and asparagine 114.

This sequence belongs to the PTH family. Monomer.

The protein localises to the cytoplasm. The catalysed reaction is an N-acyl-L-alpha-aminoacyl-tRNA + H2O = an N-acyl-L-amino acid + a tRNA + H(+). Hydrolyzes ribosome-free peptidyl-tRNAs (with 1 or more amino acids incorporated), which drop off the ribosome during protein synthesis, or as a result of ribosome stalling. Its function is as follows. Catalyzes the release of premature peptidyl moieties from peptidyl-tRNA molecules trapped in stalled 50S ribosomal subunits, and thus maintains levels of free tRNAs and 50S ribosomes. The sequence is that of Peptidyl-tRNA hydrolase from Streptococcus pneumoniae serotype 2 (strain D39 / NCTC 7466).